The sequence spans 177 residues: ATP synthase subunit delta (177 aa).

The protein belongs to the ATPase delta chain family. In terms of assembly, F-type ATPases have 2 components, F(1) - the catalytic core - and F(0) - the membrane proton channel. F(1) has five subunits: alpha(3), beta(3), gamma(1), delta(1), epsilon(1). F(0) has three main subunits: a(1), b(2) and c(10-14). The alpha and beta chains form an alternating ring which encloses part of the gamma chain. F(1) is attached to F(0) by a central stalk formed by the gamma and epsilon chains, while a peripheral stalk is formed by the delta and b chains.

It localises to the cell inner membrane. In terms of biological role, f(1)F(0) ATP synthase produces ATP from ADP in the presence of a proton or sodium gradient. F-type ATPases consist of two structural domains, F(1) containing the extramembraneous catalytic core and F(0) containing the membrane proton channel, linked together by a central stalk and a peripheral stalk. During catalysis, ATP synthesis in the catalytic domain of F(1) is coupled via a rotary mechanism of the central stalk subunits to proton translocation. Its function is as follows. This protein is part of the stalk that links CF(0) to CF(1). It either transmits conformational changes from CF(0) to CF(1) or is implicated in proton conduction. The polypeptide is ATP synthase subunit delta (Aliivibrio fischeri (strain MJ11) (Vibrio fischeri)).